Here is a 225-residue protein sequence, read N- to C-terminus: MAIRDWPEGEGPREKLLQRGAAHLSDAELLAVLLRNGVSGQNAVDLARELIGEFGGLRPLFSATKQQVCRLQGLGPVKYAQLQASAELARRLAGESLQRGAVLTSPDLTRDYLRFQLADRAYEVFAVLLLDSQHRVIQFVELFRGTIDAASVYPRELVSLVLEKRAAAVIVCHNHPSGVAEPSQADRRITERLKNALATIDVSLLDHMVVGDREIVSFAERGWIG.

The 123-residue stretch at 102-224 (VLTSPDLTRD…IVSFAERGWI (123 aa)) folds into the MPN domain. 3 residues coordinate Zn(2+): His173, His175, and Asp186. Positions 173–186 (HNHPSGVAEPSQAD) match the JAMM motif motif.

The protein belongs to the UPF0758 family.

This is UPF0758 protein Sama_0327 from Shewanella amazonensis (strain ATCC BAA-1098 / SB2B).